The following is a 921-amino-acid chain: Sodium/calcium exchanger 2 (921 aa).

An N-terminal signal peptide occupies residues 1 to 20; sequence MAPLALVGVTLLLAAPPCSG. Topologically, residues 21–68 are extracellular; that stretch reads AATPTPSLPPPPANDSDTSTGGCQGSYRCQPGVLLPVWEPDDPSLGDK. The tract at residues 22 to 42 is disordered; it reads ATPTPSLPPPPANDSDTSTGG. N-linked (GlcNAc...) asparagine glycosylation is present at Asn34. A helical membrane pass occupies residues 69-90; that stretch reads AARAVVYFVAMVYMFLGVSIIA. Residues 91–130 lie on the Cytoplasmic side of the membrane; sequence DRFMAAIEVITSKEKEITITKANGETSVGTVRIWNETVSN. The helical transmembrane segment at 131–152 threads the bilayer; it reads LTLMALGSSAPEILLSVIEVCG. Residues 135-175 form an Alpha-1 repeat; that stretch reads ALGSSAPEILLSVIEVCGHNFQAGELGPGTIVGSAAFNMFV. The Extracellular segment spans residues 153–164; it reads HNFQAGELGPGT. Residues 165-185 form a helical membrane-spanning segment; that stretch reads IVGSAAFNMFVVIAVCIYVIP. Residues 186–196 are Cytoplasmic-facing; that stretch reads AGESRKIKHLR. A helical membrane pass occupies residues 197 to 219; it reads VFFVTASWSIFAYVWLYLILAVF. Over 220–222 the chain is Extracellular; that stretch reads SPG. A helical transmembrane segment spans residues 223–246; that stretch reads VVQVWEALLTLVFFPVCVVFAWMA. At 247–720 the chain is on the cytoplasmic side; that stretch reads DKRLLFYKYV…DGSREERLPS (474 aa). A putative calmodulin-binding region region spans residues 248–267; the sequence is KRLLFYKYVYKRYRTDPRSG. 2 Calx-beta domains span residues 384-483 and 512-612; these read GAGE…VRLL and ATVT…IELG. Glu407, Asp443, Asp468, Asp469, Ile471, Glu473, Glu476, Asp518, Asp519, Asp520, Glu536, Asp598, Glu599, and Glu600 together coordinate Ca(2+). Ser622 carries the post-translational modification Phosphoserine. Glu665 provides a ligand contact to Ca(2+). The chain crosses the membrane as a helical span at residues 721–740; that stretch reads CFDYVMHFLTVFWKVLFACV. Topologically, residues 741–747 are extracellular; it reads PPTEYCH. Residues 748-770 form a helical membrane-spanning segment; it reads GWACFGVSILVIGLLTALIGDLA. Residues 771–772 lie on the Cytoplasmic side of the membrane; it reads SH. Residues 773-791 form a helical membrane-spanning segment; the sequence is FGCTVGLKDSVNAVVFVAL. Residues 790 to 826 form an Alpha-2 repeat; sequence ALGTSIPDTFASKVAALQDQCADASIGNVTGSNAVNV. The Extracellular segment spans residues 792–822; it reads GTSIPDTFASKVAALQDQCADASIGNVTGSN. N-linked (GlcNAc...) asparagine glycosylation is present at Asn817. Residues 823 to 843 form a helical membrane-spanning segment; sequence AVNVFLGLGVAWSVAAVYWAV. Over 844 to 854 the chain is Cytoplasmic; that stretch reads QGRPFEVRTGT. Residues 855–875 form a helical membrane-spanning segment; it reads LAFSVTLFTVFAFVGIAVLLY. At 876–892 the chain is on the extracellular side; that stretch reads RRRPHIGGELGGPRGPK. A helical membrane pass occupies residues 893–909; it reads LATTALFLGLWLLYILF. Residues 910–921 are Cytoplasmic-facing; the sequence is ASLEAYCHIRGF.

The protein belongs to the Ca(2+):cation antiporter (CaCA) (TC 2.A.19) family. SLC8 subfamily.

The protein localises to the cell membrane. It localises to the basolateral cell membrane. Its subcellular location is the perikaryon. The protein resides in the cell projection. It is found in the dendrite. The protein localises to the dendritic spine. It carries out the reaction Ca(2+)(in) + 3 Na(+)(out) = Ca(2+)(out) + 3 Na(+)(in). Its activity is regulated as follows. Calcium transport is down-regulated by Na(+) and stimulated by Ca(2+). Its function is as follows. Mediates the electrogenic exchange of Ca(2+) against Na(+) ions across the cell membrane, and thereby contributes to the regulation of cytoplasmic Ca(2+) levels and Ca(2+)-dependent cellular processes. Contributes to cellular Ca(2+) homeostasis in excitable cells. Contributes to the rapid decrease of cytoplasmic Ca(2+) levels back to baseline after neuronal activation, and thereby contributes to modulate synaptic plasticity, learning and memory. Plays a role in regulating urinary Ca(2+) and Na(+) excretion. This chain is Sodium/calcium exchanger 2 (SLC8A2), found in Homo sapiens (Human).